The chain runs to 224 residues: dTTP/UTP pyrophosphatase (224 aa).

Catalysis depends on Asp77, which acts as the Proton acceptor.

Belongs to the Maf family. YhdE subfamily. A divalent metal cation serves as cofactor.

The protein resides in the cytoplasm. The catalysed reaction is dTTP + H2O = dTMP + diphosphate + H(+). It catalyses the reaction UTP + H2O = UMP + diphosphate + H(+). Nucleoside triphosphate pyrophosphatase that hydrolyzes dTTP and UTP. May have a dual role in cell division arrest and in preventing the incorporation of modified nucleotides into cellular nucleic acids. The polypeptide is dTTP/UTP pyrophosphatase (Dehalococcoides mccartyi (strain CBDB1)).